The following is a 127-amino-acid chain: Small ribosomal subunit protein bS6 (127 aa).

This sequence belongs to the bacterial ribosomal protein bS6 family.

In terms of biological role, binds together with bS18 to 16S ribosomal RNA. The chain is Small ribosomal subunit protein bS6 from Acinetobacter baumannii (strain AB0057).